The sequence spans 454 residues: uncharacterized protein (454 aa).

In terms of domain architecture, HNH spans 364 to 405; that stretch reads CSRPGCDAPAYHSEVHHVTPWTTTHRTDINDLTLACGPDNRL. The interval 415-434 is disordered; sequence NAKGDTEWLPPAHLDHGQPR.

This sequence belongs to the Rv1128c/1148c/1588c/1702c/1945/3466 family.

This is an uncharacterized protein from Mycobacterium tuberculosis (strain CDC 1551 / Oshkosh).